The following is a 346-amino-acid chain: Signal recognition particle receptor FtsY (346 aa).

GTP contacts are provided by residues 143 to 150, 225 to 229, and 289 to 292; these read GVNGVGKT, DTSGR, and TKMD.

This sequence belongs to the GTP-binding SRP family. FtsY subfamily. As to quaternary structure, part of the signal recognition particle protein translocation system, which is composed of SRP and FtsY.

The protein resides in the cell membrane. The protein localises to the cytoplasm. It carries out the reaction GTP + H2O = GDP + phosphate + H(+). Involved in targeting and insertion of nascent membrane proteins into the cytoplasmic membrane. Acts as a receptor for the complex formed by the signal recognition particle (SRP) and the ribosome-nascent chain (RNC). The protein is Signal recognition particle receptor FtsY of Mycoplasma genitalium (strain ATCC 33530 / DSM 19775 / NCTC 10195 / G37) (Mycoplasmoides genitalium).